The sequence spans 320 residues: Cytochrome f (320 aa).

The first 35 residues, 1–35 (MQTRNTFSWIKEEITRSISVSLMIYIITGASISNA), serve as a signal peptide directing secretion. Residues Tyr36, Cys56, Cys59, and His60 each coordinate heme. A helical membrane pass occupies residues 286 to 306 (VQGLLFFLASIVFAQIFLVLK).

The protein belongs to the cytochrome f family. As to quaternary structure, the 4 large subunits of the cytochrome b6-f complex are cytochrome b6, subunit IV (17 kDa polypeptide, petD), cytochrome f and the Rieske protein, while the 4 small subunits are PetG, PetL, PetM and PetN. The complex functions as a dimer. Heme is required as a cofactor.

It localises to the plastid. The protein localises to the chloroplast thylakoid membrane. In terms of biological role, component of the cytochrome b6-f complex, which mediates electron transfer between photosystem II (PSII) and photosystem I (PSI), cyclic electron flow around PSI, and state transitions. The polypeptide is Cytochrome f (Gossypium hirsutum (Upland cotton)).